We begin with the raw amino-acid sequence, 462 residues long: ATP synthase subunit beta (462 aa).

152–159 contacts ATP; it reads GGAGVGKT.

The protein belongs to the ATPase alpha/beta chains family. F-type ATPases have 2 components, CF(1) - the catalytic core - and CF(0) - the membrane proton channel. CF(1) has five subunits: alpha(3), beta(3), gamma(1), delta(1), epsilon(1). CF(0) has three main subunits: a(1), b(2) and c(9-12). The alpha and beta chains form an alternating ring which encloses part of the gamma chain. CF(1) is attached to CF(0) by a central stalk formed by the gamma and epsilon chains, while a peripheral stalk is formed by the delta and b chains.

It localises to the cell inner membrane. The catalysed reaction is ATP + H2O + 4 H(+)(in) = ADP + phosphate + 5 H(+)(out). Functionally, produces ATP from ADP in the presence of a proton gradient across the membrane. The catalytic sites are hosted primarily by the beta subunits. The polypeptide is ATP synthase subunit beta (Aeromonas hydrophila subsp. hydrophila (strain ATCC 7966 / DSM 30187 / BCRC 13018 / CCUG 14551 / JCM 1027 / KCTC 2358 / NCIMB 9240 / NCTC 8049)).